Reading from the N-terminus, the 789-residue chain is SWI5-dependent HO expression protein 4 (789 aa).

Serine 18 is subject to Phosphoserine.

The protein localises to the cytoplasm. Functionally, required for mother cell-specific ho expression. Might be required for the transport of factors (such as ASH1) that promote HO repression from the mother cell into its bud. The polypeptide is SWI5-dependent HO expression protein 4 (SHE4) (Saccharomyces cerevisiae (strain ATCC 204508 / S288c) (Baker's yeast)).